Here is a 322-residue protein sequence, read N- to C-terminus: Gas vesicle protein L (322 aa).

The disordered stretch occupies residues 1-85; it reads MTEQSSGSAT…SEQATVDWST (85 aa). The segment covering 17 to 36 has biased composition (basic and acidic residues); the sequence is ETAKQETGRKNEQPEERTVT. Residues 45–57 show a composition bias toward polar residues; sequence INTTTAESETGSE. A compositionally biased stretch (basic and acidic residues) spans 58 to 72; that stretch reads QESKAGSEQESKAGS. The segment covering 73–85 has biased composition (polar residues); sequence EQESEQATVDWST.

Belongs to the gas vesicle GvpF/GvpL family. GvpF to GvpM interact with each other in vitro, and may form multi-subunit complex(es). Interacts with GvpC, GvpN and GvpO.

Its subcellular location is the gas vesicle. Proteins GvpF to GvpM might be involved in nucleating gas vesicle formation. A minor component of the gas vesicle. Gas vesicles are small, hollow, gas filled protein structures that are found in several microbial planktonic microorganisms. They allow positioning of halobacteria at the optimal depth for growth in the poorly aerated, shallow brine pools of their habitat. Its function is as follows. Expression of a 9.5 kb mc-vac DNA fragment containing 2 divergently transcribed regions (gvpD-gvpE-gvpF-gvpG-gvpH-gvpI-gvpJ-gvpK-gvpL-gvpM and gvpA-gvpC-gvpN-gvpO) allows H.volcanii to produce gas vesicles. This is Gas vesicle protein L from Haloferax mediterranei (strain ATCC 33500 / DSM 1411 / JCM 8866 / NBRC 14739 / NCIMB 2177 / R-4) (Halobacterium mediterranei).